The primary structure comprises 232 residues: 6-phosphogluconolactonase (232 aa).

The protein belongs to the glucosamine/galactosamine-6-phosphate isomerase family. 6-phosphogluconolactonase subfamily.

The catalysed reaction is 6-phospho-D-glucono-1,5-lactone + H2O = 6-phospho-D-gluconate + H(+). It functions in the pathway carbohydrate degradation; pentose phosphate pathway; D-ribulose 5-phosphate from D-glucose 6-phosphate (oxidative stage): step 2/3. Its function is as follows. Hydrolysis of 6-phosphogluconolactone to 6-phosphogluconate. In Haemophilus influenzae (strain ATCC 51907 / DSM 11121 / KW20 / Rd), this protein is 6-phosphogluconolactonase (pgl).